The primary structure comprises 34 residues: Dermaseptin-H5 (34 aa).

Expressed by the skin glands.

It is found in the secreted. In terms of biological role, has antimicrobial activity. This is Dermaseptin-H5 from Pithecopus hypochondrialis (Orange-legged leaf frog).